Here is a 216-residue protein sequence, read N- to C-terminus: Snake venom metalloproteinase HT-1 (216 aa).

The 87-residue stretch at 8-94 (PPVCGNELLE…DCPMDDFHRN (87 aa)) folds into the Disintegrin domain. Residues Val10, Asn13, Leu15, Glu17, Glu20, and Asp23 each coordinate Ca(2+). Intrachain disulfides connect Cys11–Cys40, Cys22–Cys35, Cys24–Cys30, Cys34–Cys57, Cys48–Cys54, Cys53–Cys79, Cys66–Cys86, Cys73–Cys105, Cys98–Cys110, Cys117–Cys167, Cys132–Cys178, Cys145–Cys155, Cys162–Cys204, and Cys198–Cys209. The D/ECD-tripeptide signature appears at 72 to 74 (ECD). The N-linked (GlcNAc...) asparagine glycan is linked to Asn175.

Belongs to the venom metalloproteinase (M12B) family. P-III subfamily. P-IIIa sub-subfamily. Monomer. Zn(2+) serves as cofactor. In terms of tissue distribution, expressed by the venom gland.

The protein localises to the secreted. Zinc protease from snake venom that induces hemorrhage. The polypeptide is Snake venom metalloproteinase HT-1 (Crotalus ruber ruber (Red diamond rattlesnake)).